Consider the following 794-residue polypeptide: Hyaluronan mediated motility receptor (794 aa).

The disordered stretch occupies residues 1-87; that stretch reads MSFPKAPLKR…SQKNDKDVKR (87 aa). The residue at position 20 (serine 20) is a Phosphoserine. Basic and acidic residues predominate over residues 74–87; sequence SKKDSQKNDKDVKR. Asparagine 134, asparagine 279, asparagine 446, asparagine 467, asparagine 488, asparagine 509, asparagine 530, asparagine 561, and asparagine 601 each carry an N-linked (GlcNAc...) asparagine glycan. The segment at 365–630 is required for interaction with FAM83D; sequence EEMTSEKNVF…ITDLKNQLRQ (266 aa). 5 repeat units span residues 442 to 462, 463 to 483, 484 to 504, 505 to 525, and 526 to 546. Positions 442–546 are 5 X 21 AA tandem repeats; sequence QEKYNDTAQS…RDVTAQLESY (105 aa). 2 hyaluronic acid-binding regions span residues 719–729 and 741–750; these read KQKIKHVVKLK and KLRSQLVKRK. Residue threonine 784 is modified to Phosphothreonine.

Interacts with ANKRD26. Interacts with DYNLL1. Interacts with FAM83D/CHICA. Ubiquitously expressed.

Its subcellular location is the cell surface. The protein resides in the cytoplasm. It is found in the cytoskeleton. The protein localises to the spindle. Its function is as follows. Receptor for hyaluronic acid (HA). Involved in cell motility. When hyaluronan binds to HMMR, the phosphorylation of a number of proteins, including the PTK2/FAK1 occurs. May also be involved in cellular transformation and metastasis formation, and in regulating extracellular-regulated kinase (ERK) activity. May act as a regulator of adipogenesis. The protein is Hyaluronan mediated motility receptor (Hmmr) of Mus musculus (Mouse).